Reading from the N-terminus, the 211-residue chain is 5-formyltetrahydrofolate cyclo-ligase (211 aa).

4 to 8 (KQLLR) is a binding site for ATP. Substrate contacts are provided by residues Glu56 and 152-156 (HGAGY). Residues 151 to 158 (GHGAGYYD) and Asp194 contribute to the ATP site.

Belongs to the 5-formyltetrahydrofolate cyclo-ligase family. Post-translationally, N-glycosylated.

It localises to the mitochondrion. The enzyme catalyses (6S)-5-formyl-5,6,7,8-tetrahydrofolate + ATP = (6R)-5,10-methenyltetrahydrofolate + ADP + phosphate. Its function is as follows. Only enzyme known to utilize 5-formyltetrahydrofolate (folinic acid) as substrate. Contributes to tetrahydrofolate metabolism in an alternative way of folate biosynthesis. May regulate carbon flow through the folate-dependent one-carbon metabolic network that supplies carbon for the biosynthesis of purines, thymidine and amino acids. The chain is 5-formyltetrahydrofolate cyclo-ligase (FAU1) from Saccharomyces cerevisiae (strain ATCC 204508 / S288c) (Baker's yeast).